Reading from the N-terminus, the 525-residue chain is MTKIERALISVSDKNGVLEFARELSALGVHILSTGGTAKLLLEAGLPVTEVSDYTGFPEMLDGRVKTLHPKVHGGILGRRDLPEHVATMAEHGIGNIDLVCVNLYPFEATVANPDCSLEDAIENIDIGGPTMVRSAAKNWAHVAIVTDSADYPALVGELKANGGRLAKATRFELAKKAFTHTAAYDGAISNYLTSLAEGVVAGKPERVAFPNRLNAQFIKVQDMRYGENPHQAAAFYRDLDPAAGSIAHYKQLQGKELSYNNIADADAAWEAVKTFEQTACVIVKHANPCGVAVGPDTLSAYKLAFATDTTSAFGGIIAFNRPVDAATVEAVTGQFLEVLIAPSFTEEAKAIIAAKKNVRVLEIPLESGANRFELKRVGGGVLVQTPDIRNVGLDELRVVSKRQPTPQEMSDLLFAWRVAKFVKSNAIVFCKDGQTAGIGAGQMSRVDSTRIAARKAQDAGLSLAGAVAASDAFFPFRDGIDVIAEQGIKAIIQPGGSMRDEEVFAAADEHGIALVLTGVRHFRH.

Residues methionine 1–threonine 147 form the MGS-like domain.

It belongs to the PurH family.

It catalyses the reaction (6R)-10-formyltetrahydrofolate + 5-amino-1-(5-phospho-beta-D-ribosyl)imidazole-4-carboxamide = 5-formamido-1-(5-phospho-D-ribosyl)imidazole-4-carboxamide + (6S)-5,6,7,8-tetrahydrofolate. The catalysed reaction is IMP + H2O = 5-formamido-1-(5-phospho-D-ribosyl)imidazole-4-carboxamide. It participates in purine metabolism; IMP biosynthesis via de novo pathway; 5-formamido-1-(5-phospho-D-ribosyl)imidazole-4-carboxamide from 5-amino-1-(5-phospho-D-ribosyl)imidazole-4-carboxamide (10-formyl THF route): step 1/1. Its pathway is purine metabolism; IMP biosynthesis via de novo pathway; IMP from 5-formamido-1-(5-phospho-D-ribosyl)imidazole-4-carboxamide: step 1/1. This is Bifunctional purine biosynthesis protein PurH from Chromobacterium violaceum (strain ATCC 12472 / DSM 30191 / JCM 1249 / CCUG 213 / NBRC 12614 / NCIMB 9131 / NCTC 9757 / MK).